A 116-amino-acid polypeptide reads, in one-letter code: Large ribosomal subunit protein uL22 (116 aa).

Belongs to the universal ribosomal protein uL22 family. As to quaternary structure, part of the 50S ribosomal subunit.

Functionally, this protein binds specifically to 23S rRNA; its binding is stimulated by other ribosomal proteins, e.g. L4, L17, and L20. It is important during the early stages of 50S assembly. It makes multiple contacts with different domains of the 23S rRNA in the assembled 50S subunit and ribosome. Its function is as follows. The globular domain of the protein is located near the polypeptide exit tunnel on the outside of the subunit, while an extended beta-hairpin is found that lines the wall of the exit tunnel in the center of the 70S ribosome. In Sulfurihydrogenibium sp. (strain YO3AOP1), this protein is Large ribosomal subunit protein uL22.